The primary structure comprises 340 residues: Armadillo repeat-containing protein 12 (340 aa).

Residues 1 to 101 (MGKSIPQYLG…SITRCVYLLE (101 aa)) form an interaction with TBC1D15 region. 3 ARM repeats span residues 100–139 (LEAEASACTTDDIVLLGYMLDDKDNSVKTQALNTLKAFSG), 179–218 (LPDYVHPQLRRVMPALMEILQSDYILAQVQAVRLLSYLAQ), and 278–318 (SLHE…SLQY).

As to quaternary structure, interacts with TBC1D15, TBC1D21, GK2 and IMMT. Interacts with VDAC2 and VDAC3 in a TBC1D21-dependent manner. Interacts (via ARM domains) with RBBP4. As to expression, expressed in testis. Highly expressed in the mid-piece of the elongated and late spermatids. Expressed at higher levels in neuroblastoma tissues and cell lines, than those of normal dorsal ganglia (at protein level). Expressed in breast cancer, colon cancer, hepatocellular carcinoma, lung cancer, pancreas cancer, prostate cancer, renal cancer and gastric cancer, but not in their normal counterparts.

It is found in the nucleus. It localises to the mitochondrion outer membrane. In terms of biological role, essential for male fertility and sperm mitochondrial sheath formation. Required for proper mitochondrial elongation and coiling along the flagellum during the formation of the mitochondrial sheath. Facilitates the growth and aggressiveness of neuroblastoma cells. Increases the EZH2 activity and H3K27me3 levels in a RBBP4-dependent manner, and facilitates the enrichment of polycomb repressive complex 2 and H3K27me3 on gene promoters, resulting in transcriptional repression of tumor suppressors affecting the proliferation, invasion, and metastasis of tumor cells. The protein is Armadillo repeat-containing protein 12 (ARMC12) of Homo sapiens (Human).